The sequence spans 427 residues: Peptidase B (427 aa).

Mn(2+) is bound by residues lysine 195 and aspartate 200. Residue lysine 207 is part of the active site. Mn(2+) is bound by residues aspartate 218, aspartate 277, and glutamate 279. Arginine 281 is a catalytic residue.

The protein belongs to the peptidase M17 family. As to quaternary structure, homohexamer. Mn(2+) is required as a cofactor.

The protein resides in the cytoplasm. It carries out the reaction Release of an N-terminal amino acid, Xaa, from a peptide or arylamide. Xaa is preferably Glu or Asp but may be other amino acids, including Leu, Met, His, Cys and Gln.. Functionally, probably plays an important role in intracellular peptide degradation. In Escherichia coli (strain K12 / MC4100 / BW2952), this protein is Peptidase B.